A 269-amino-acid chain; its full sequence is Energy-coupling factor transporter ATP-binding protein EcfA1 (269 aa).

The ABC transporter domain maps to 8–242 (ITFNHVRFKY…GDGLTEIGLD (235 aa)). Position 42-49 (42-49 (GHNGSGKS)) interacts with ATP.

The protein belongs to the ABC transporter superfamily. Energy-coupling factor EcfA family. Forms a stable energy-coupling factor (ECF) transporter complex composed of 2 membrane-embedded substrate-binding proteins (S component), 2 ATP-binding proteins (A component) and 2 transmembrane proteins (T component).

It is found in the cell membrane. ATP-binding (A) component of a common energy-coupling factor (ECF) ABC-transporter complex. Unlike classic ABC transporters this ECF transporter provides the energy necessary to transport a number of different substrates. The sequence is that of Energy-coupling factor transporter ATP-binding protein EcfA1 from Staphylococcus saprophyticus subsp. saprophyticus (strain ATCC 15305 / DSM 20229 / NCIMB 8711 / NCTC 7292 / S-41).